A 125-amino-acid polypeptide reads, in one-letter code: Photoactive yellow protein (125 aa).

The PAS domain occupies 23–86 (IDDLAFGAIQ…GRFREGVANG (64 aa)). Cys-69 is modified (S-(4-hydroxycinnamyl)cysteine).

It belongs to the photoactive yellow protein family. Post-translationally, the 4-hydroxycinnamic acid (p-coumaric acid) chromophore is covalently bound via a thioester linkage.

Functionally, this photoactive protein is a photoreceptor with kinetics similar to that of rhodopsin. In Rhodothalassium salexigens (Rhodospirillum salexigens), this protein is Photoactive yellow protein (pyp).